Here is a 162-residue protein sequence, read N- to C-terminus: Nucleotide-binding protein Adeh_0094 (162 aa).

This sequence belongs to the YajQ family.

Its function is as follows. Nucleotide-binding protein. In Anaeromyxobacter dehalogenans (strain 2CP-C), this protein is Nucleotide-binding protein Adeh_0094.